Consider the following 348-residue polypeptide: MAGRGKRKPRSLPQTETPNGEVKKAKEGLKDDKTSVGEEMREEVERLYKLRMPDDFFQFWDFCEGLNADCPQDALKNTLGLQLVGPFDILSKKHKNSSSQPNFHLHWRYFYDPPEFQTIIQGNADTQHHMGYFRDLPDALPVFIGENEAKKGYTITQLGDNIFAAVLLFLQKKKKEKRQQKDDAALNRLEEDLKREAERLGLPLEQKTKSMKQRERKVVTKTFHGAGIVVPVDKNDVGYRELPESDASLKKICKAIAEAKDDEERMKAFAPIQEMITFVQFANDECDYGMGYELGIDLFCYGSHYFFKVVRQLLPMAYNLLKRGLFGEILEAHLASRSQDNLDQLAAV.

The segment covering 1-10 (MAGRGKRKPR) has biased composition (basic residues). The tract at residues 1 to 38 (MAGRGKRKPRSLPQTETPNGEVKKAKEGLKDDKTSVGE) is disordered. Residues 21-38 (EVKKAKEGLKDDKTSVGE) show a composition bias toward basic and acidic residues. Positions 170–200 (LQKKKKEKRQQKDDAALNRLEEDLKREAERL) form a coiled coil. Residue Glu-285 is the Proton donor of the active site.

This sequence belongs to the HPF1 family. As to quaternary structure, interacts with PARP1 (via the PARP catalytic domain). Interacts with PARP2 (via the PARP catalytic domain). Interacts with core nucleosomes in a parp1- and parp2-dependent manner. As to expression, in adult, mainly expressed in gonads.

The protein resides in the chromosome. It is found in the nucleus. In terms of biological role, cofactor for serine ADP-ribosylation that confers serine specificity on parp1 and parp2 and plays a key role in DNA damage response. Initiates the repair of double-strand DNA breaks: recruited to DNA damage sites by parp1 and parp2 and switches the amino acid specificity of parp1 and parp2 from aspartate or glutamate to serine residues, licensing serine ADP-ribosylation of target proteins. Serine ADP-ribosylation of target proteins, such as histones, promotes decompaction of chromatin and the recruitment of repair factors leading to the reparation of DNA strand breaks. Serine ADP-ribosylation of proteins constitutes the primary form of ADP-ribosylation of proteins in response to DNA damage. Hpf1 acts by completing the active site of parp1 and parp2: forms a composite active site composed of residues from Hpf1 and parp1 or parp2. While hpf1 promotes the initiation of serine ADP-ribosylation, it restricts the polymerase activity of parp1 and parp2 in order to limit the length of poly-ADP-ribose chains. Hpf1 also promotes tyrosine ADP-ribosylation, probably by conferring tyrosine specificity on parp1. This Danio rerio (Zebrafish) protein is Histone PARylation factor 1.